Reading from the N-terminus, the 322-residue chain is Ribosomal RNA small subunit methyltransferase H (322 aa).

Residues 42–44 (GGH), D62, F86, D107, and Q114 contribute to the S-adenosyl-L-methionine site.

The protein belongs to the methyltransferase superfamily. RsmH family.

It localises to the cytoplasm. The catalysed reaction is cytidine(1402) in 16S rRNA + S-adenosyl-L-methionine = N(4)-methylcytidine(1402) in 16S rRNA + S-adenosyl-L-homocysteine + H(+). Its function is as follows. Specifically methylates the N4 position of cytidine in position 1402 (C1402) of 16S rRNA. This Janthinobacterium sp. (strain Marseille) (Minibacterium massiliensis) protein is Ribosomal RNA small subunit methyltransferase H.